Here is a 361-residue protein sequence, read N- to C-terminus: Queuine tRNA-ribosyltransferase (361 aa).

The active-site Proton acceptor is aspartate 92. Residues 92-96, aspartate 146, glutamine 189, and glycine 216 contribute to the substrate site; that span reads DSGGF. Residues 247–253 are RNA binding; it reads GVGKPAD. The active-site Nucleophile is aspartate 266. The segment at 271-275 is RNA binding; important for wobble base 34 recognition; sequence TRSGR. Cysteine 304, cysteine 306, cysteine 309, and histidine 335 together coordinate Zn(2+).

It belongs to the queuine tRNA-ribosyltransferase family. In terms of assembly, homodimer. Within each dimer, one monomer is responsible for RNA recognition and catalysis, while the other monomer binds to the replacement base PreQ1. Requires Zn(2+) as cofactor.

It carries out the reaction 7-aminomethyl-7-carbaguanine + guanosine(34) in tRNA = 7-aminomethyl-7-carbaguanosine(34) in tRNA + guanine. It participates in tRNA modification; tRNA-queuosine biosynthesis. In terms of biological role, catalyzes the base-exchange of a guanine (G) residue with the queuine precursor 7-aminomethyl-7-deazaguanine (PreQ1) at position 34 (anticodon wobble position) in tRNAs with GU(N) anticodons (tRNA-Asp, -Asn, -His and -Tyr). Catalysis occurs through a double-displacement mechanism. The nucleophile active site attacks the C1' of nucleotide 34 to detach the guanine base from the RNA, forming a covalent enzyme-RNA intermediate. The proton acceptor active site deprotonates the incoming PreQ1, allowing a nucleophilic attack on the C1' of the ribose to form the product. After dissociation, two additional enzymatic reactions on the tRNA convert PreQ1 to queuine (Q), resulting in the hypermodified nucleoside queuosine (7-(((4,5-cis-dihydroxy-2-cyclopenten-1-yl)amino)methyl)-7-deazaguanosine). This Rickettsia typhi (strain ATCC VR-144 / Wilmington) protein is Queuine tRNA-ribosyltransferase.